The primary structure comprises 547 residues: Type I inositol polyphosphate 5-phosphatase 4 (547 aa).

The span at 56–67 (CSVRKSKTETRS) shows a compositional bias: basic and acidic residues. Residues 56–80 (CSVRKSKTETRSKRNSGRARRNKLD) form a disordered region. Catalytic stretches follow at residues 387-402 (DRVI…IALS) and 467-482 (KRRT…WHGS).

Belongs to the inositol polyphosphate 5-phosphatase family.

This chain is Type I inositol polyphosphate 5-phosphatase 4, found in Arabidopsis thaliana (Mouse-ear cress).